We begin with the raw amino-acid sequence, 94 residues long: MGRSTKKGPFIDNNLLEKVQKMNTSSEKKPIKTWARACTIVPEFIGHTFMVHNGKKFLPVYITERMVGHKLGEFSFTRVFKTHGGMTKESTALK.

It belongs to the universal ribosomal protein uS19 family.

Functionally, protein S19 forms a complex with S13 that binds strongly to the 16S ribosomal RNA. This is Small ribosomal subunit protein uS19 from Elusimicrobium minutum (strain Pei191).